The following is a 437-amino-acid chain: Enolase (437 aa).

Gln-163 is a binding site for (2R)-2-phosphoglycerate. Catalysis depends on Glu-205, which acts as the Proton donor. Positions 242, 285, and 312 each coordinate Mg(2+). (2R)-2-phosphoglycerate-binding residues include Lys-337, Arg-366, Ser-367, and Lys-388. Residue Lys-337 is the Proton acceptor of the active site.

This sequence belongs to the enolase family. Requires Mg(2+) as cofactor.

The protein localises to the cytoplasm. Its subcellular location is the secreted. It localises to the cell surface. The catalysed reaction is (2R)-2-phosphoglycerate = phosphoenolpyruvate + H2O. The protein operates within carbohydrate degradation; glycolysis; pyruvate from D-glyceraldehyde 3-phosphate: step 4/5. Functionally, catalyzes the reversible conversion of 2-phosphoglycerate (2-PG) into phosphoenolpyruvate (PEP). It is essential for the degradation of carbohydrates via glycolysis. The polypeptide is Enolase (Nitratidesulfovibrio vulgaris (strain DP4) (Desulfovibrio vulgaris)).